A 154-amino-acid polypeptide reads, in one-letter code: Ribosome maturation factor RimP (154 aa).

Belongs to the RimP family.

The protein localises to the cytoplasm. In terms of biological role, required for maturation of 30S ribosomal subunits. The chain is Ribosome maturation factor RimP from Desulforudis audaxviator (strain MP104C).